We begin with the raw amino-acid sequence, 260 residues long: DNA repair protein RecO (260 aa).

It belongs to the RecO family.

Involved in DNA repair and RecF pathway recombination. The protein is DNA repair protein RecO of Salinibacter ruber (strain DSM 13855 / M31).